Reading from the N-terminus, the 985-residue chain is Ephrin type-A receptor 4-B (985 aa).

The N-terminal stretch at 1 to 20 is a signal peptide; that stretch reads MAGIVHGILFCGLFGLCWAV. The Extracellular portion of the chain corresponds to 21-547; it reads TGSRIYPASE…MIGEGTSPTV (527 aa). Residues 30–209 enclose the Eph LBD domain; that stretch reads EVTLLDSRSV…FYKKCPLTVR (180 aa). Fibronectin type-III domains lie at 328–438 and 439–536; these read PPSA…TNQA and APST…TVPS. Residues asparagine 340 and asparagine 407 are each glycosylated (N-linked (GlcNAc...) asparagine). The helical transmembrane segment at 548–569 threads the bilayer; sequence LLVSVAGSIVLVVILIAAFVIS. Over 570-985 the chain is Cytoplasmic; sequence RRRSKYSKAK…QQMQGRMVPV (416 aa). A phosphotyrosine; by autocatalysis mark is found at tyrosine 595 and tyrosine 601. Residues 620–881 form the Protein kinase domain; the sequence is IKIEKVIGVG…QIVSMLDKLI (262 aa). ATP contacts are provided by residues 626 to 634 and lysine 652; that span reads IGVGEFGEV. Aspartate 745 serves as the catalytic Proton acceptor. Residues tyrosine 778 and tyrosine 927 each carry the phosphotyrosine; by autocatalysis modification. Residues 910–974 form the SAM domain; the sequence is SQVASVLDWL…LSSVQGMRTQ (65 aa). The PDZ-binding motif lies at 983–985; the sequence is VPV.

It belongs to the protein kinase superfamily. Tyr protein kinase family. Ephrin receptor subfamily. Localized expression in a subset of neural crest and neural tissues in embryos.

It is found in the cell membrane. It localises to the early endosome. The catalysed reaction is L-tyrosyl-[protein] + ATP = O-phospho-L-tyrosyl-[protein] + ADP + H(+). Receptor tyrosine kinase which binds membrane-bound ephrin family ligands residing on adjacent cells, leading to contact-dependent bidirectional signaling into neighboring cells. The signaling pathway downstream of the receptor is referred to as forward signaling while the signaling pathway downstream of the ephrin ligand is referred to as reverse signaling. Highly promiscuous, it has the unique property among Eph receptors to bind and to be physiologically activated by both GPI-anchored ephrin-A and transmembrane ephrin-B ligands including EFNA1 and EFNB3. Upon activation by ephrin ligands, modulates cell morphology and integrin-dependent cell adhesion through regulation of the Rac, Rap and Rho GTPases activity. Plays an important role in the development of the nervous system controlling different steps of axonal guidance including the establishment of the corticospinal projections. The chain is Ephrin type-A receptor 4-B (epha4-b) from Xenopus laevis (African clawed frog).